Consider the following 310-residue polypeptide: Methionyl-tRNA formyltransferase (310 aa).

109–112 (SLLP) provides a ligand contact to (6S)-5,6,7,8-tetrahydrofolate.

It belongs to the Fmt family.

It carries out the reaction L-methionyl-tRNA(fMet) + (6R)-10-formyltetrahydrofolate = N-formyl-L-methionyl-tRNA(fMet) + (6S)-5,6,7,8-tetrahydrofolate + H(+). In terms of biological role, attaches a formyl group to the free amino group of methionyl-tRNA(fMet). The formyl group appears to play a dual role in the initiator identity of N-formylmethionyl-tRNA by promoting its recognition by IF2 and preventing the misappropriation of this tRNA by the elongation apparatus. The chain is Methionyl-tRNA formyltransferase from Pseudomonas putida (strain ATCC 47054 / DSM 6125 / CFBP 8728 / NCIMB 11950 / KT2440).